Reading from the N-terminus, the 549-residue chain is ATP synthase subunit alpha (549 aa).

172–179 (GDRKTGKT) lines the ATP pocket. The disordered stretch occupies residues 513–549 (SSTGESVVPDEHVEAMDEEDLGKESVKVKKPAPQKKK). Basic residues predominate over residues 540 to 549 (VKKPAPQKKK).

Belongs to the ATPase alpha/beta chains family. F-type ATPases have 2 components, CF(1) - the catalytic core - and CF(0) - the membrane proton channel. CF(1) has five subunits: alpha(3), beta(3), gamma(1), delta(1), epsilon(1). CF(0) has three main subunits: a(1), b(2) and c(9-12). The alpha and beta chains form an alternating ring which encloses part of the gamma chain. CF(1) is attached to CF(0) by a central stalk formed by the gamma and epsilon chains, while a peripheral stalk is formed by the delta and b chains.

It localises to the cell membrane. The enzyme catalyses ATP + H2O + 4 H(+)(in) = ADP + phosphate + 5 H(+)(out). Functionally, produces ATP from ADP in the presence of a proton gradient across the membrane. The alpha chain is a regulatory subunit. This Mycobacterium marinum (strain ATCC BAA-535 / M) protein is ATP synthase subunit alpha.